The chain runs to 771 residues: MELKRLSISWQFLIVLVLILQSLSALDFDPYRVLGVSRTASQADIKKAYKKLAREWHPDKNKDPGAEDKFIQISKAYEILSNEEKRTNYDHYGDAGENQGYQQQREYRFRHFHENFYFDESFFHFPFNSERRDSIDEKYLLHFSHYVNEVVPDSFKKPYLIKITSDWCFSCIHIEPIWKEVVQELEGLGVGIGVVHAGYERRLAHHLGAHSTPSILGIINGKISFFHNAVVHENLRQFVESLLPGNLVEKVTNKNYVRFLSGWQQENKPHALLFGQTPAAPLLYKLTAFAYKDYVSFGYVYVGLRGVEEMTRQYNVNIYAPTMLIFKEHINKPADAIQARGLKKQVIEDFITQNKYLLASRLTSQKLFHELCPVKRSHRQRKYCVVLLTAEANKLSKPFDAFLSFALANTQDTVRFVHVYSSRQQEFASTLLPDIEAFQGKSGVSILERRNTAGRVVFKTLEDPWTGSESDKFVLLGYLDQLRKDPAFLSSEAVLPDLTDELAPVFLLRWLYSVSDYLSDFWESLLHSNWREMMPLLSLIFSALFILFGTVIVQAFSDSNEERESHPPDKEEVPEKAGKTEPSFTKESSSKIPKKGFVEVTELTDVTYTSNLVRLRPGHMNVVLILSNSTKTSLLQKFALEVYTFTGSSSLHFSFLTLDKHREWLEYLLEFAQDAAPIPNQYDKHFMERDYTGYVLALNGHKKYFCLFKPLKTVDEETVGSCDLDSSRGKPPCGLGPKPLKGKLSKLSLWMERLLEGSLQRFYIPSWPELD.

The N-terminal stretch at 1–25 (MELKRLSISWQFLIVLVLILQSLSA) is a signal peptide. At 26-532 (LDFDPYRVLG…ESLLHSNWRE (507 aa)) the chain is on the cytoplasmic side. One can recognise a J domain in the interval 29 to 93 (DPYRVLGVSR…EKRTNYDHYG (65 aa)). A Thioredoxin domain is found at 116–244 (FYFDESFFHF…LRQFVESLLP (129 aa)). Residues 533-553 (MMPLLSLIFSALFILFGTVIV) traverse the membrane as a helical; Anchor for type IV membrane protein segment. Over 554–771 (QAFSDSNEER…FYIPSWPELD (218 aa)) the chain is Extracellular. Positions 559–590 (SNEERESHPPDKEEVPEKAGKTEPSFTKESSS) are disordered. Residues 560–579 (NEERESHPPDKEEVPEKAGK) are compositionally biased toward basic and acidic residues. Residue N628 is glycosylated (N-linked (GlcNAc...) asparagine).

It localises to the endoplasmic reticulum membrane. In terms of biological role, plays an important role in regulating the size of autophagosomes during the formation process. This Rattus norvegicus (Rat) protein is DnaJ homolog subfamily C member 16 (Dnajc16).